Here is a 137-residue protein sequence, read N- to C-terminus: Histone H2B (137 aa).

Over residues 1–10 the composition is skewed to basic and acidic residues; the sequence is MAPKAADKKP. A disordered region spans residues 1-46; sequence MAPKAADKKPASKAPATASKAPEKKDAGKKTAASGDKKKRSKSRKE. Lysine 8 and lysine 9 each carry N6-acetyllysine; alternate. Residues lysine 8 and lysine 9 each participate in a glycyl lysine isopeptide (Lys-Gly) (interchain with G-Cter in SUMO); alternate cross-link. Serine 12 is subject to Phosphoserine. Position 13 is an N6-acetyllysine (lysine 13). Lysine 24 carries the post-translational modification N6-acetyllysine; alternate. Residue lysine 24 forms a Glycyl lysine isopeptide (Lys-Gly) (interchain with G-Cter in SUMO); alternate linkage. Lysine 25 is covalently cross-linked (Glycyl lysine isopeptide (Lys-Gly) (interchain with G-Cter in SUMO)). Lysine 131 is covalently cross-linked (Glycyl lysine isopeptide (Lys-Gly) (interchain with G-Cter in ubiquitin)).

Belongs to the histone H2B family. The nucleosome is a histone octamer containing two molecules each of H2A, H2B, H3 and H4 assembled in one H3-H4 heterotetramer and two H2A-H2B heterodimers. The octamer wraps approximately 147 bp of DNA. In terms of processing, monoubiquitinated by the UBC2-BRE1 complex to form H2BK123ub1. H2BK123ub1 gives a specific tag for epigenetic transcriptional activation and is also prerequisite for H3K4me and H3K79me formation. H2BK123ub1 also modulates the formation of double-strand breaks during meiosis and is a prerequisite for DNA-damage checkpoint activation. Phosphorylated to form H2BS10ph during progression through meiotic prophase. May be correlated with chromosome condensation. Post-translationally, acetylated by GCN5 to form H2BK11ac and H2BK16ac. H2BK16ac can also be formed by ESA1. Acetylation of N-terminal lysines and particularly formation of H2BK11acK16ac has a positive effect on transcription. In terms of processing, sumoylation to form H2BK6su or H2BK7su, and probably also H2BK16su or H2BK17su, occurs preferentially near the telomeres and represses gene transcription.

The protein resides in the nucleus. Its subcellular location is the chromosome. Its function is as follows. Core component of nucleosome. Nucleosomes wrap and compact DNA into chromatin, limiting DNA accessibility to the cellular machineries which require DNA as a template. Histones thereby play a central role in transcription regulation, DNA repair, DNA replication and chromosomal stability. DNA accessibility is regulated via a complex set of post-translational modifications of histones, also called histone code, and nucleosome remodeling. This is Histone H2B (HTB1) from Gibberella zeae (strain ATCC MYA-4620 / CBS 123657 / FGSC 9075 / NRRL 31084 / PH-1) (Wheat head blight fungus).